The primary structure comprises 74 residues: Protein SlyX homolog (74 aa).

The interval 54–74 (QDRNPDAQEPYSLRDEIPPHY) is disordered.

It belongs to the SlyX family.

This is Protein SlyX homolog from Neisseria gonorrhoeae (strain ATCC 700825 / FA 1090).